Reading from the N-terminus, the 306-residue chain is tRNA pseudouridine synthase B (306 aa).

Aspartate 51 acts as the Nucleophile in catalysis.

The protein belongs to the pseudouridine synthase TruB family. Type 1 subfamily.

The enzyme catalyses uridine(55) in tRNA = pseudouridine(55) in tRNA. Its function is as follows. Responsible for synthesis of pseudouridine from uracil-55 in the psi GC loop of transfer RNAs. The polypeptide is tRNA pseudouridine synthase B (Nocardia farcinica (strain IFM 10152)).